Reading from the N-terminus, the 680-residue chain is MSALNSLPLPVVRLLAFFHEELSERRPGRVPQIVQLWVGCLLVILISMTFEIPFVALSLAVLFYGIQSNAFYTKFVAILFVVATVLEIGSLFLIYKWSYGEPLIRLIIAGPILMGCMFLMRTHRLGLVFFAVAIYGQTFPAMLDYPEVVVRLTLWCIVVGLYPTLLMTLIGVLWFPNRAITQMHQALNDRLDDAISHLTDSLAPLPETRIEREALALQKLNVFCLADDANWRTQSAWWQSCVATVTYIYSTLNRYDPTSFADSQAIIEFRQKLASEINKLQHAVAEGQCWQSDWRLSESEAVAARECNLENICQTLLQLGQMNPNTPPTPAAKPPSMVADAFTNPDYIRYAVKTLLACLICYTFYSGVDWEGIHTCMLTCVIVANPNVGSSYQKMVLRFGGAFCGAILALLFTLLVMPWLDNIVELLFVLAPIFLLGAWIATSSERSSYIGTQMVVTFALATLENVFGPVYDLVEIRDRALGIIIGTVVSAMIYTFVWPESEARTLPQKLAGALGMLSKVMRIPRQQEVTALRTYLQIRIGLHAAFNACEEMCQRVALERQLDSEERALLIERSQTVIRQGRDILHAWDATWNSAQALDNALQPDRAGQFADALEKYAAGLATALSRSPQITLEETPTSQAILPTLLKQEQHVCQLFARLPDWTAPALTPATEQAQGATQ.

9 helical membrane passes run 43–63, 75–95, 100–120, 125–145, 155–175, 399–419, 423–443, 454–474, and 480–500; these read VILI…AVLF, FVAI…FLIY, GEPL…MFLM, LGLV…MLDY, WCIV…VLWF, FGGA…VMPW, IVEL…IATS, MVVT…YDLV, and ALGI…VWPE.

It belongs to the MdtO family. As to quaternary structure, could be part of a tripartite efflux system composed of MdtN, MdtO and MdtP.

It localises to the cell inner membrane. In terms of biological role, could be involved in resistance to puromycin, acriflavine and tetraphenylarsonium chloride. The protein is Multidrug resistance protein MdtO (mdtO) of Shigella flexneri.